Reading from the N-terminus, the 138-residue chain is Basic phospholipase A2 homolog Tpu-K49a (138 aa).

Residues 1–16 form the signal peptide; the sequence is MRTLWIMAVLLVGVEG. 6 disulfides stabilise this stretch: Cys-42-Cys-131, Cys-44-Cys-60, Cys-59-Cys-111, Cys-65-Cys-138, Cys-66-Cys-104, and Cys-91-Cys-102. The segment at 121–133 is important for membrane-damaging activities in eukaryotes and bacteria; heparin-binding; it reads KKERINTKIFCKK.

As to quaternary structure, monomer. In terms of tissue distribution, expressed by the venom gland.

The protein resides in the secreted. Snake venom phospholipase A2 homolog that lacks catalytic activity. Induces local edema a few hours after injection in the hind foot. Is myotoxic. A model of myotoxic mechanism has been proposed: an apo Lys49-PLA2 is activated by the entrance of a hydrophobic molecule (e.g. fatty acid) at the hydrophobic channel of the protein leading to a reorientation of a monomer. This reorientation causes a transition between 'inactive' to 'active' states, causing alignment of C-terminal and membrane-docking sites (MDoS) side-by-side and putting the membrane-disruption sites (MDiS) in the same plane, exposed to solvent and in a symmetric position for both monomers. The MDoS region stabilizes the toxin on membrane by the interaction of charged residues with phospholipid head groups. Subsequently, the MDiS region destabilizes the membrane with penetration of hydrophobic residues. This insertion causes a disorganization of the membrane, allowing an uncontrolled influx of ions (i.e. calcium and sodium), and eventually triggering irreversible intracellular alterations and cell death. This chain is Basic phospholipase A2 homolog Tpu-K49a, found in Craspedocephalus puniceus (Flat-nosed pitviper).